The chain runs to 127 residues: Large ribosomal subunit protein uL22 (127 aa).

Belongs to the universal ribosomal protein uL22 family. In terms of assembly, part of the 50S ribosomal subunit.

In terms of biological role, this protein binds specifically to 23S rRNA; its binding is stimulated by other ribosomal proteins, e.g. L4, L17, and L20. It is important during the early stages of 50S assembly. It makes multiple contacts with different domains of the 23S rRNA in the assembled 50S subunit and ribosome. Functionally, the globular domain of the protein is located near the polypeptide exit tunnel on the outside of the subunit, while an extended beta-hairpin is found that lines the wall of the exit tunnel in the center of the 70S ribosome. This is Large ribosomal subunit protein uL22 from Methylobacterium nodulans (strain LMG 21967 / CNCM I-2342 / ORS 2060).